The sequence spans 134 residues: Probable histone H2A.3 (134 aa).

This sequence belongs to the histone H2A family. In terms of assembly, the nucleosome is a histone octamer containing two molecules each of H2A, H2B, H3 and H4 assembled in one H3-H4 heterotetramer and two H2A-H2B heterodimers. The octamer wraps approximately 147 bp of DNA.

Its subcellular location is the nucleus. It is found in the chromosome. Its function is as follows. Core component of nucleosome. Nucleosomes wrap and compact DNA into chromatin, limiting DNA accessibility to the cellular machineries which require DNA as a template. Histones thereby play a central role in transcription regulation, DNA repair, DNA replication and chromosomal stability. DNA accessibility is regulated via a complex set of post-translational modifications of histones, also called histone code, and nucleosome remodeling. This Oryza sativa subsp. indica (Rice) protein is Probable histone H2A.3.